The primary structure comprises 913 residues: Collagen alpha-2(I) chain (913 aa).

A disordered region spans residues 1–913 (SGGFDFSFLP…FGYEGDFYRA (913 aa)). 4-hydroxyproline is present on residues Pro-10, Pro-13, Pro-35, and Pro-41. Low complexity-rich tracts occupy residues 28–67 (LMGPRGPPGASGAPGPQGFQGPAGEPGEPGQTGPAGARGP), 125–154 (VGAPGPAGARGSDGSVGPVGPAGPIGSAGP), and 199–220 (PGANGLTGAKGAAGLPGVAGAP). Positions 254–263 (GESGGKGEPG) are enriched in gly residues. Residues 264–274 (SAGPQGPPGSS) show a composition bias toward low complexity. The span at 281–303 (GPNGGSTGPTGPPGLRGGPGSRG) shows a compositional bias: gly residues. Positions 316 to 332 (PAGARGASGPAGVRGPS) are enriched in low complexity. A 4-hydroxyproline mark is found at Pro-338 and Pro-341. Composition is skewed to low complexity over residues 367 to 386 (LPGIDGRPGPIGPAGARGEA) and 408 to 421 (PDGNNGAQGPPGLQ). Over residues 422–431 (GVQGGKGTTG) the composition is skewed to gly residues. Low complexity-rich tracts occupy residues 459–476 (PGESGAVGPSGAIGSRGP) and 488–498 (EPGVVGAPGTA). The segment covering 499-517 (GPAGSGGPGERGAAGIPGG) has biased composition (gly residues). 2 stretches are compositionally biased toward low complexity: residues 527–574 (RGEV…PRGS) and 581–601 (VGPAGPNGFAGPAGAAGQPGA). Residues 602–611 (KGERGTKGPK) show a composition bias toward basic and acidic residues. Residues 619–629 (PTGPVGSAGPA) are compositionally biased toward low complexity. The span at 639–648 (GSRGDGGPPG) shows a compositional bias: gly residues. Residues 650 to 659 (TGFPGAAGRT) are compositionally biased toward low complexity. The segment covering 696-705 (GETGAGGPPG) has biased composition (gly residues). 2 stretches are compositionally biased toward low complexity: residues 713-740 (SGEPGTAGPPGTAGPQGLLGAPGILGLP) and 748-758 (LPGVAGAVGEP). Residues 759–776 (GPLGIGPPGARGPSGAGK) are compositionally biased toward gly residues. Residues 782–797 (EPGPVGSVGPVGALGP) are compositionally biased toward low complexity. The span at 807 to 818 (RGDKGEPGEKGP) shows a compositional bias: basic and acidic residues. The segment covering 883 to 895 (SGPPGPPGPPGPP) has biased composition (pro residues).

The protein belongs to the fibrillar collagen family. As to quaternary structure, trimers of one alpha 2(I) and two alpha 1(I) chains. Interacts (via C-terminus) with TMEM131 (via PapD-L domain); the interaction is direct and is involved in assembly and TRAPPIII ER-to-Golgi transport complex-dependent secretion of collagen. Prolines at the third position of the tripeptide repeating unit (G-X-Y) are hydroxylated in some or all of the chains. In terms of tissue distribution, expressed in bones.

The protein localises to the secreted. It is found in the extracellular space. It localises to the extracellular matrix. Its function is as follows. Type I collagen is a member of group I collagen (fibrillar forming collagen). The polypeptide is Collagen alpha-2(I) chain (Parocnus serus (Greater Haitian ground sloth)).